Reading from the N-terminus, the 570-residue chain is Mitogen-activated protein kinase 11 (570 aa).

The region spanning 26–317 (YEVLEVIGKG…AQEALADPYF (292 aa)) is the Protein kinase domain. ATP-binding positions include 32 to 40 (IGKGSYGLV) and Lys-55. Asp-152 acts as the Proton acceptor in catalysis. Thr-188 carries the phosphothreonine modification. The TXY motif lies at 188–190 (TDY). The residue at position 190 (Tyr-190) is a Phosphotyrosine.

It belongs to the protein kinase superfamily. CMGC Ser/Thr protein kinase family. MAP kinase subfamily. Post-translationally, dually phosphorylated on Thr-188 and Tyr-190, which activates the enzyme.

The enzyme catalyses L-seryl-[protein] + ATP = O-phospho-L-seryl-[protein] + ADP + H(+). It carries out the reaction L-threonyl-[protein] + ATP = O-phospho-L-threonyl-[protein] + ADP + H(+). Its activity is regulated as follows. Activated by threonine and tyrosine phosphorylation. The chain is Mitogen-activated protein kinase 11 (MPK11) from Oryza sativa subsp. japonica (Rice).